A 160-amino-acid chain; its full sequence is Phosphopantetheine adenylyltransferase (160 aa).

Thr9 lines the substrate pocket. ATP is bound by residues Thr9–Phe10 and His17. Substrate is bound by residues Lys41, Leu73, and Arg87. ATP contacts are provided by residues Gly88–Arg90, Glu98, and Tyr123–Ser129.

The protein belongs to the bacterial CoaD family. Homohexamer. Mg(2+) serves as cofactor.

It is found in the cytoplasm. It carries out the reaction (R)-4'-phosphopantetheine + ATP + H(+) = 3'-dephospho-CoA + diphosphate. It functions in the pathway cofactor biosynthesis; coenzyme A biosynthesis; CoA from (R)-pantothenate: step 4/5. In terms of biological role, reversibly transfers an adenylyl group from ATP to 4'-phosphopantetheine, yielding dephospho-CoA (dPCoA) and pyrophosphate. The polypeptide is Phosphopantetheine adenylyltransferase (Thiobacillus denitrificans (strain ATCC 25259 / T1)).